Consider the following 323-residue polypeptide: Methionyl-tRNA formyltransferase (323 aa).

117–120 (SLLP) contacts (6S)-5,6,7,8-tetrahydrofolate.

It belongs to the Fmt family.

The catalysed reaction is L-methionyl-tRNA(fMet) + (6R)-10-formyltetrahydrofolate = N-formyl-L-methionyl-tRNA(fMet) + (6S)-5,6,7,8-tetrahydrofolate + H(+). Its function is as follows. Attaches a formyl group to the free amino group of methionyl-tRNA(fMet). The formyl group appears to play a dual role in the initiator identity of N-formylmethionyl-tRNA by promoting its recognition by IF2 and preventing the misappropriation of this tRNA by the elongation apparatus. The protein is Methionyl-tRNA formyltransferase of Albidiferax ferrireducens (strain ATCC BAA-621 / DSM 15236 / T118) (Rhodoferax ferrireducens).